A 546-amino-acid polypeptide reads, in one-letter code: Chaperonin GroEL 2 (546 aa).

Residues 29–32 (TLGP), 86–90 (DGTTT), G418, 482–484 (NAA), and D498 contribute to the ATP site.

It belongs to the chaperonin (HSP60) family. In terms of assembly, forms a cylinder of 14 subunits composed of two heptameric rings stacked back-to-back. Interacts with the co-chaperonin GroES.

It is found in the cytoplasm. The enzyme catalyses ATP + H2O + a folded polypeptide = ADP + phosphate + an unfolded polypeptide.. Its function is as follows. Together with its co-chaperonin GroES, plays an essential role in assisting protein folding. The GroEL-GroES system forms a nano-cage that allows encapsulation of the non-native substrate proteins and provides a physical environment optimized to promote and accelerate protein folding. This is Chaperonin GroEL 2 from Corynebacterium diphtheriae (strain ATCC 700971 / NCTC 13129 / Biotype gravis).